The primary structure comprises 216 residues: DNA-binding protein HupB (216 aa).

Position 2 (G2) is a propeptide, removed; alternate. N-acetylmethionine is present on M3. The bacterial histone-like domain stretch occupies residues 3 to 92; the sequence is MNKAELIDVL…PGAQFKAVVS (90 aa). An N6-acetyllysine mark is found at K5, K74, K88, K105, K118, and K135. Residues 102–216 form a disordered region; that stretch reads PAVKRGVGAS…KKATARRGRK (115 aa). The degenerate repeats region stretch occupies residues 103-216; that stretch reads AVKRGVGASA…KKATARRGRK (114 aa). Low complexity predominate over residues 104–114; it reads VKRGVGASAAK. Residues 115–216 show a composition bias toward basic residues; that stretch reads KVAKKAPAKK…KKATARRGRK (102 aa). K140 carries the N6,N6,N6-trimethyllysine modification. An N6-acetyllysine mark is found at K148 and K169.

It belongs to the bacterial histone-like protein family. Long actinobacterial subfamily. As to quaternary structure, oligomerizes. Interacts with topoisomerase 1 (topA). Interacts with Eis. Interacts with antigen 85 proteins (fbpA, fbpB, fbpC). Post-translationally, probably acetylated by Eis in vivo. In vitro acetylated by Eis (strain H37Rv and H37Ra) on many more residues than those identified in vivo. Deacetylated in vitro by NAD-dependent protein deacylase (Rv1151c). Trimethylated on Lys-140 by human SUV39H1; trimethylation inhibits mycobacterial growth. SUV39H1 probably also trimethylates another residue. In terms of processing, probably succinylated by Rv0802c and desuccinylated by NAD-dependent protein deacylase (Rv1151c).

It is found in the cytoplasm. It localises to the nucleoid. The protein localises to the secreted. The protein resides in the cell wall. It carries out the reaction 4 Fe(2+) + O2 + 4 H(+) = 4 Fe(3+) + 2 H2O. Its function is as follows. A nucleoid-associated protein (NAP) that probably plays a role in chromosome compactation. Binds DNA non-specifically, with greater affinity for supercoiled than linear DNA, binds well to nicked DNA, gapped and cruciform DNA. Has a preference for A:T rich DNA. Required for activation of the mtbB operon. Binds the mtbB promoter in the presence of iron, binding is seen with as little as 25 uM Fe(2+) and increases with increasing Fe(2+). RNase E and HupB jointly contribute to cellular adaptation to changing growth conditions and survival during antibiotic treatment and in the host. Plays a role in stress survival. Stimulates supercoiling relaxation by topoisomerase 1 (Top1, topA). Binds Fe(3+) but not Fe(2+). Has ferroxidase activity, converts Fe(2+) into Fe(3+) and in the presence of H(2)O(2) prevents the generation of hydroxyl radicals (the Fenton reaction). Protects DNA from damage in the presence of FeSO(4) and H(2)O(2). May function in iron storage. Involved in iron uptake by bacteria (either Fe(3+) or extracellular carboxymycobactin); antibodies against HupB block uptake of both. Following uptake iron is mostly found in the iron siderophores carboxymycobactin (CMb, extracellular) or mycobactin (Mb, lipophilic). Facilitates transfer of iron from CMb to Mb when liposomes plus a cell wall lysate are incubated with CMb. Binds iron, ferri-CMb and ferri-Mb; has 10-fold higher affinity for ferri-Mb. Suggested to transfer iron from CBm to Mb at the cell membrane. In terms of biological role, required for biofilm formation; trimethylation by recombinant human SUV39H1 (a histone methyltransferase) inhibits biofilm formation. Induces lymphoproliferation, particularly in health tuberculin reactors, and is immunogenic. Maybe involved in pathogenesis of inflammatory bowel disease (IBD) in patients with ulcerative colitis and Crohn disease (CD). Bound by anti-neutrophil cytoplasmic antibodies (pANCA), which are a hallmark of IBD. The binding is due to pANCA directed against H1-3 cross-reacting with DBH epitopes. In CD, target of a strong IgA response. Functionally, may play a role in cell wall assembly. In vitro at low levels enhances formation of TMM and TDM by antigen 85 proteins (fbpA, fbpB, fbpC), at higher levels inhibits TMM and TDM formation. This chain is DNA-binding protein HupB, found in Mycobacterium tuberculosis (strain ATCC 25618 / H37Rv).